Here is a 585-residue protein sequence, read N- to C-terminus: SCF E3 ubiquitin ligase complex F-box protein grrA (585 aa).

The segment covering 1 to 10 (MARSRQPTRF) has biased composition (polar residues). 2 disordered regions span residues 1 to 34 (MARSRQPTRFSSEAPSESSSSTSPERAADDDTDF) and 41 to 60 (DSQSSIGAGNPRDSHIQNDP). A compositionally biased stretch (low complexity) spans 11–25 (SSEAPSESSSSTSPE). The F-box domain occupies 65 to 113 (PPIAYLPPEILISIFSKLSSPRDLLSCLLVCRIWALNCVGLLWHRPSCN). LRR repeat units follow at residues 147–171 (TEDVSDGTVVPFSQCNRIERLTLTN), 172–197 (CRKLTDIGVSDLVVGSRHLQALDVSE), 198–223 (LRSLTDHTLFKVAENCNRLQGLNITG), 224–249 (CVKVTDDSLIAVSQNCRLLKRLKLNG), 250–275 (VSQVTDKAILSFAQNCPSILEIDLQE), 276–301 (CKLVTNQSVTALMTTLQNLRELRLAH), 302–329 (CTEIDDSAFLDLPRHIQMTSLRILDLTA), 330–355 (CENIRDEAVERIVSSAPRLRNLVLAK), 356–381 (CKFITDRAVWAICKLGKNLHYVHLGH), 382–407 (CSNINDSAVIQLVKSCNRIRYIDLAC), 408–432 (CSRLTDRSVQQLATLPKLRRIGLVK), 433–465 (CQLITDASILALARPAQDHSVPCSSLERVHLSY), and 466–491 (CVNLTMVGIHALLNSCPRLTHLSLTG).

In terms of assembly, part of a SCF E3 ubiquitin ligase complex. As to expression, specifically expressed in ascus mother cells.

Its subcellular location is the cytoplasm. Its function is as follows. Involved in meiosis and required for ascospore formation. Involved in substrate recognition in ubiquitin-dependent degradation. The polypeptide is SCF E3 ubiquitin ligase complex F-box protein grrA (grrA) (Emericella nidulans (strain FGSC A4 / ATCC 38163 / CBS 112.46 / NRRL 194 / M139) (Aspergillus nidulans)).